The primary structure comprises 123 residues: uncharacterized protein (123 aa).

Residues 1–28 (MGLGSSKRKEEPPHKSEPKTVGRVKRAG) are disordered. Positions 7 to 20 (KRKEEPPHKSEPKT) are enriched in basic and acidic residues.

This sequence belongs to the TUSC2 family.

This is an uncharacterized protein from Caenorhabditis elegans.